Here is a 103-residue protein sequence, read N- to C-terminus: UPF0145 protein Amet_0532 (103 aa).

This sequence belongs to the UPF0145 family.

The protein is UPF0145 protein Amet_0532 of Alkaliphilus metalliredigens (strain QYMF).